The chain runs to 382 residues: Gap junction alpha-1 protein (382 aa).

Residues 2–23 (GDWSALGKLLDKVQAYSTAGGK) lie on the Cytoplasmic side of the membrane. S5 is modified (phosphoserine). Residues 24–44 (VWLSVLFIFRILLLGTAVESA) traverse the membrane as a helical segment. At 45 to 76 (WGDEQSAFRCNTQQPGCENVCYDKSFPISHVR) the chain is on the extracellular side. 2 cysteine pairs are disulfide-bonded: C54-C192 and C187-C198. A helical membrane pass occupies residues 77–97 (FWVLQIIFVSVPTLLYLAHVF). The Cytoplasmic segment spans residues 98-155 (YVMRKEEKLNKKEEELKVAQTDGVNVEMHLKQIEIKKFKYGIEEHGKVKMRGGLLRTY). K144 participates in a covalent cross-link: Glycyl lysine isopeptide (Lys-Gly) (interchain with G-Cter in SUMO). A helical membrane pass occupies residues 156–176 (IISILFKSVFEVAFLLIQWYI). Topologically, residues 177–207 (YGFSLSAVYTCKRDPCPHQVDCFLSRPTEKT) are extracellular. The helical transmembrane segment at 208–228 (IFIIFMLVVSLVSLALNIIEL) threads the bilayer. Residues 229 to 382 (FYVFFKGVKD…SRPRPDDLEI (154 aa)) lie on the Cytoplasmic side of the membrane. K237 participates in a covalent cross-link: Glycyl lysine isopeptide (Lys-Gly) (interchain with G-Cter in SUMO). The segment at 244–382 (SDPYHATTGP…SRPRPDDLEI (139 aa)) is interaction with NOV. Y247 is modified (phosphotyrosine). A phosphoserine mark is found at S255, S257, and S262. Residues 264–382 (KYAYFNGCSS…SRPRPDDLEI (119 aa)) form an interaction with UBQLN4 region. C271 bears the S-nitrosocysteine mark. Phosphothreonine is present on T275. S306 and S314 each carry phosphoserine. Positions 317–332 (QNRMGQAGSTISNSHA) are enriched in polar residues. The tract at residues 317 to 382 (QNRMGQAGST…SRPRPDDLEI (66 aa)) is disordered. A Phosphoserine; by CK1 modification is found at S325. Residue T326 is modified to Phosphothreonine. Residues S328 and S330 each carry the phosphoserine; by CK1 modification. 2 positions are modified to phosphoserine: S344 and S365. Residues 362 to 374 (RPSSRASSRASSR) are compositionally biased toward low complexity. S368 bears the Phosphoserine; by PKC/PRKCG and PKC/PRKCD mark. 2 positions are modified to phosphoserine: S369 and S373.

It belongs to the connexin family. Alpha-type (group II) subfamily. As to quaternary structure, a connexon is composed of a hexamer of connexins. Interacts with SGSM3. Interacts with RIC1/CIP150. Interacts with CNST and CSNK1D. Interacts (via C-terminus) with TJP1. Interacts (via C-terminus) with SRC (via SH3 domain). Interacts (not ubiquitinated) with UBQLN4 (via UBA domain). Interacts with NOV. Interacts with TMEM65. Interacts with ANK3/ANKG and PKP2. Post-translationally, phosphorylation at Ser-325, Ser-328 and Ser-330 by CK1 modulates gap junction assembly. Phosphorylated at Ser-368 by PRKCG; phosphorylation induces disassembly of gap junction plaques and inhibition of gap junction activity. Phosphorylation at Ser-368 by PRKCD triggers its internalization into small vesicles leading to proteasome-mediated degradation. Sumoylated with SUMO1, SUMO2 and SUMO3, which may regulate the level of functional Cx43 gap junctions at the plasma membrane. May be desumoylated by SENP1 or SENP2. In terms of processing, S-nitrosylation at Cys-271 is enriched at the muscle endothelial gap junction in arteries, it augments channel permeability and may regulate of smooth muscle cell to endothelial cell communication. Post-translationally, acetylated in the developing cortex; leading to delocalization from the cell membrane.

It localises to the cell membrane. Its subcellular location is the cell junction. The protein localises to the gap junction. The protein resides in the endoplasmic reticulum. In terms of biological role, gap junction protein that acts as a regulator of bladder capacity. A gap junction consists of a cluster of closely packed pairs of transmembrane channels, the connexons, through which materials of low MW diffuse from one cell to a neighboring cell. May play a critical role in the physiology of hearing by participating in the recycling of potassium to the cochlear endolymph. Negative regulator of bladder functional capacity: acts by enhancing intercellular electrical and chemical transmission, thus sensitizing bladder muscles to cholinergic neural stimuli and causing them to contract. May play a role in cell growth inhibition through the regulation of NOV expression and localization. Plays an essential role in gap junction communication in the ventricles. The protein is Gap junction alpha-1 protein (GJA1) of Oryctolagus cuniculus (Rabbit).